The chain runs to 163 residues: ATP synthase subunit delta, mitochondrial (163 aa).

Residues 1–18 (MLARTIQRFSVVAKRGYA) constitute a mitochondrion transit peptide.

Belongs to the ATPase epsilon chain family. As to quaternary structure, subunit of the F-type ATPase which has 2 components, CF(1) - the catalytic core - and CF(0) - the membrane proton channel.

Its subcellular location is the mitochondrion. It is found in the mitochondrion inner membrane. Functionally, mitochondrial membrane ATP synthase (F(1)F(0) ATP synthase or Complex V) produces ATP from ADP in the presence of a proton gradient across the membrane which is generated by electron transport complexes of the respiratory chain. F-type ATPases consist of two structural domains, F(1) - containing the extramembraneous catalytic core, and F(0) - containing the membrane proton channel, linked together by a central stalk and a peripheral stalk. During catalysis, ATP turnover in the catalytic domain of F(1) is coupled via a rotary mechanism of the central stalk subunits to proton translocation. Part of the complex F(1) domain and of the central stalk which is part of the complex rotary element. The polypeptide is ATP synthase subunit delta, mitochondrial (Caenorhabditis elegans).